The following is a 134-amino-acid chain: MNTLNLDIVTPNGSVYNRDNVELVVMQTTAGEIGVMSGHIPTVAALKTGFVKVKFHDGTEYIAVSDGFVEVRKDKVSIIVQTAETAREIDVERAKLAKARAESHLENDDDNTDIHRAERALERANNRLRVAELK.

The protein belongs to the ATPase epsilon chain family. In terms of assembly, F-type ATPases have 2 components, CF(1) - the catalytic core - and CF(0) - the membrane proton channel. CF(1) has five subunits: alpha(3), beta(3), gamma(1), delta(1), epsilon(1). CF(0) has three main subunits: a, b and c.

The protein resides in the cell membrane. Its function is as follows. Produces ATP from ADP in the presence of a proton gradient across the membrane. This chain is ATP synthase epsilon chain, found in Staphylococcus aureus (strain USA300).